A 254-amino-acid polypeptide reads, in one-letter code: Type III pantothenate kinase (254 aa).

6 to 13 (DVGNSNIV) is an ATP binding site. Substrate-binding positions include Tyr100 and 107-110 (GADR). The active-site Proton acceptor is Asp109. K(+) is bound at residue Asp129. Thr132 is an ATP binding site. Thr184 serves as a coordination point for substrate.

The protein belongs to the type III pantothenate kinase family. As to quaternary structure, homodimer. NH4(+) serves as cofactor. It depends on K(+) as a cofactor.

It is found in the cytoplasm. The enzyme catalyses (R)-pantothenate + ATP = (R)-4'-phosphopantothenate + ADP + H(+). It functions in the pathway cofactor biosynthesis; coenzyme A biosynthesis; CoA from (R)-pantothenate: step 1/5. Catalyzes the phosphorylation of pantothenate (Pan), the first step in CoA biosynthesis. The protein is Type III pantothenate kinase of Geobacter sp. (strain M21).